We begin with the raw amino-acid sequence, 214 residues long: Phosphatidylserine decarboxylase proenzyme (214 aa).

Catalysis depends on S182, which acts as the Schiff-base intermediate with substrate; via pyruvic acid. The residue at position 182 (S182) is a Pyruvic acid (Ser); by autocatalysis.

This sequence belongs to the phosphatidylserine decarboxylase family. PSD-A subfamily. In terms of assembly, heterodimer of a large membrane-associated beta subunit and a small pyruvoyl-containing alpha subunit. Pyruvate is required as a cofactor. Post-translationally, is synthesized initially as an inactive proenzyme. Formation of the active enzyme involves a self-maturation process in which the active site pyruvoyl group is generated from an internal serine residue via an autocatalytic post-translational modification. Two non-identical subunits are generated from the proenzyme in this reaction, and the pyruvate is formed at the N-terminus of the alpha chain, which is derived from the carboxyl end of the proenzyme. The post-translation cleavage follows an unusual pathway, termed non-hydrolytic serinolysis, in which the side chain hydroxyl group of the serine supplies its oxygen atom to form the C-terminus of the beta chain, while the remainder of the serine residue undergoes an oxidative deamination to produce ammonia and the pyruvoyl prosthetic group on the alpha chain.

The protein resides in the cell membrane. It carries out the reaction a 1,2-diacyl-sn-glycero-3-phospho-L-serine + H(+) = a 1,2-diacyl-sn-glycero-3-phosphoethanolamine + CO2. It functions in the pathway phospholipid metabolism; phosphatidylethanolamine biosynthesis; phosphatidylethanolamine from CDP-diacylglycerol: step 2/2. Its function is as follows. Catalyzes the formation of phosphatidylethanolamine (PtdEtn) from phosphatidylserine (PtdSer). In Solidesulfovibrio magneticus (strain ATCC 700980 / DSM 13731 / RS-1) (Desulfovibrio magneticus), this protein is Phosphatidylserine decarboxylase proenzyme.